A 284-amino-acid polypeptide reads, in one-letter code: MLIIETPPTLRQTVKQWSQEHKRIALIPTMGNLHEGHMALIDAGRARADKVVVSVFVNPMQFDRPEDLAAYPRTLQEDCEQLTRRGVDMVFAPATGVIYPDDLASQTFVDVPRFANILEGESRPGHFRGVATIVSKLFNLVQPDVACFGEKDFQQLAFIRQLVRDMSYDIEIIGVPTVRAADGLALSSRNGYLSAEERRLAPQLNQVLMRLVAQLREGERHIDGLLTSATEQLLQAGLRPDTLVIRDAQTLQPLTVDSRRAVVLFTAWLGKARLIDNAQVDLIS.

30-37 (MGNLHEGH) is a binding site for ATP. H37 functions as the Proton donor in the catalytic mechanism. Q61 serves as a coordination point for (R)-pantoate. Q61 contacts beta-alanine. ATP is bound at residue 149–152 (GEKD). Residue Q155 participates in (R)-pantoate binding. Residues V178 and 186–189 (LSSR) contribute to the ATP site.

It belongs to the pantothenate synthetase family. Homodimer.

It is found in the cytoplasm. The catalysed reaction is (R)-pantoate + beta-alanine + ATP = (R)-pantothenate + AMP + diphosphate + H(+). It participates in cofactor biosynthesis; (R)-pantothenate biosynthesis; (R)-pantothenate from (R)-pantoate and beta-alanine: step 1/1. Functionally, catalyzes the condensation of pantoate with beta-alanine in an ATP-dependent reaction via a pantoyl-adenylate intermediate. The polypeptide is Pantothenate synthetase (Sodalis glossinidius (strain morsitans)).